Here is a 346-residue protein sequence, read N- to C-terminus: [LysW]-lysine/[LysW]-ornithine hydrolase (346 aa).

His67 provides a ligand contact to Zn(2+). Residue Asp69 is part of the active site. Asp91 contacts Zn(2+). Glu121 acts as the Proton acceptor in catalysis. Zn(2+)-binding residues include Glu122, Glu145, and His316.

Belongs to the peptidase M20A family. LysK subfamily. Zn(2+) is required as a cofactor. Co(2+) serves as cofactor.

It localises to the cytoplasm. It catalyses the reaction [amino-group carrier protein]-C-terminal-gamma-(L-lysyl)-L-glutamate + H2O = [amino-group carrier protein]-C-terminal-L-glutamate + L-lysine. The enzyme catalyses [amino-group carrier protein]-C-terminal-gamma-(L-ornithyl)-L-glutamate + H2O = [amino-group carrier protein]-C-terminal-L-glutamate + L-ornithine. It participates in amino-acid biosynthesis; L-lysine biosynthesis via AAA pathway; L-lysine from L-alpha-aminoadipate (Thermus route): step 5/5. Its pathway is amino-acid biosynthesis; L-arginine biosynthesis. Functionally, catalyzes the release of L-lysine from [LysW]-gamma-L-lysine and the release of L-ornithine from [LysW]-L-ornithine. This chain is [LysW]-lysine/[LysW]-ornithine hydrolase, found in Sulfurisphaera tokodaii (strain DSM 16993 / JCM 10545 / NBRC 100140 / 7) (Sulfolobus tokodaii).